Reading from the N-terminus, the 72-residue chain is Large ribosomal subunit protein bL28 (72 aa).

Belongs to the bacterial ribosomal protein bL28 family.

The chain is Large ribosomal subunit protein bL28 from Chlorobium phaeovibrioides (strain DSM 265 / 1930) (Prosthecochloris vibrioformis (strain DSM 265)).